The primary structure comprises 161 residues: Non-secretory ribonuclease (161 aa).

Residues 1-27 (MVPKLFTSQICLLLLLGLMGVEGSLHA) form the signal peptide. The C-linked (Man) tryptophan glycan is linked to tryptophan 34. The active-site Proton acceptor is histidine 42. Asparagine 44 is a glycosylation site (N-linked (GlcNAc...) asparagine). Intrachain disulfides connect cysteine 50-cysteine 110, cysteine 64-cysteine 123, cysteine 82-cysteine 138, and cysteine 89-cysteine 98. 3'-nitrotyrosine is present on tyrosine 60. 65–69 (KNQNT) is a binding site for substrate. N-linked (GlcNAc...) asparagine glycosylation is found at asparagine 86, asparagine 92, asparagine 111, and asparagine 119. Histidine 156 functions as the Proton donor in the catalytic mechanism.

It belongs to the pancreatic ribonuclease family. Interacts with and forms a tight 1:1 complex with RNH1. Dimerization of two such complexes may occur.

It is found in the lysosome. It localises to the cytoplasmic granule. The catalysed reaction is an [RNA] containing cytidine + H2O = an [RNA]-3'-cytidine-3'-phosphate + a 5'-hydroxy-ribonucleotide-3'-[RNA].. It carries out the reaction an [RNA] containing uridine + H2O = an [RNA]-3'-uridine-3'-phosphate + a 5'-hydroxy-ribonucleotide-3'-[RNA].. Its function is as follows. This is a non-secretory ribonuclease. It is a pyrimidine specific nuclease with a slight preference for U. Cytotoxin and helminthotoxin. Possesses a wide variety of biological activities. This Nomascus leucogenys (Northern white-cheeked gibbon) protein is Non-secretory ribonuclease (RNASE2).